The sequence spans 198 residues: tRNA (pseudouridine(54)-N(1))-methyltransferase (198 aa).

S-adenosyl-L-methionine is bound by residues Leu130, Gly153, 176–181, and Cys186; that span reads LSPLEL.

Belongs to the methyltransferase superfamily. TrmY family. As to quaternary structure, homodimer.

It is found in the cytoplasm. It catalyses the reaction pseudouridine(54) in tRNA + S-adenosyl-L-methionine = N(1)-methylpseudouridine(54) in tRNA + S-adenosyl-L-homocysteine + H(+). Its function is as follows. Specifically catalyzes the N1-methylation of pseudouridine at position 54 (Psi54) in tRNAs. In Methanococcus maripaludis (strain C6 / ATCC BAA-1332), this protein is tRNA (pseudouridine(54)-N(1))-methyltransferase.